A 68-amino-acid chain; its full sequence is Large ribosomal subunit protein bL32 (68 aa).

This sequence belongs to the bacterial ribosomal protein bL32 family.

The chain is Large ribosomal subunit protein bL32 from Orientia tsutsugamushi (strain Boryong) (Rickettsia tsutsugamushi).